Consider the following 526-residue polypeptide: Cytochrome P450 monooxygenase milC (526 aa).

The chain crosses the membrane as a helical span at residues 2–20 (AIHAAYIFIAATLIALYVA). Cys470 provides a ligand contact to heme.

This sequence belongs to the cytochrome P450 family. Heme is required as a cofactor.

The protein resides in the membrane. It catalyses the reaction cordypyrone A + reduced [NADPH--hemoprotein reductase] + O2 = cordypyrone B + oxidized [NADPH--hemoprotein reductase] + H2O + H(+). It functions in the pathway secondary metabolite biosynthesis. Functionally, cytochrome P450 monooxygenase; part of the gene cluster that mediates the biosynthesis of cordypyrones A and B, 2 pyrones that show modest activities against pathogenic bacteria including methicillin-resistant Staphylococcus aureus (MRSA), Mycobacterium tuberculosis and Bacillus cereus. The HR-PKS milA catalyzes the formation of cordypyrones A via condensation of one acetate with 10 malonate units. Since milA lacks an enoyl reductase domain, the 2 beta-keto processing domains DH and KR of milA collaborate with the trans-enoyl reductase milB to catalyze the different levels of reduction. The cytochrome P450 monooxygenase milC then hydroxylates the C-22 of cordypyrones A to yield cordypyrones B. This chain is Cytochrome P450 monooxygenase milC, found in Cordyceps militaris (strain CM01) (Caterpillar fungus).